The chain runs to 972 residues: MASNNVAQFAAELKMPAGVLLEQLQAAGVQKASEDDALSEADKARLLDHLRKSHGATDGDKRKITLTRKHTSEIKQSDATGKARTIQVEVRKKRTFVKRDDVAEGAEQGQAQVAEADDDAELKRREEEARREAELLEKQAQELRERQERLEREEAERRAREEAAEAERRRAEEEAAAKRAAAAAVEAQQAAAQQAAEAQQETAGAQSAQDEARAAAERAAQREAAKKAEDAAREAADKTRAEQEEIRKRREAAEAEARAIREMMNTPRKAVVKAVEPPKPVEPPKPVEAKGTLHKPAKPAGAGAARPAVKKPAGAAPATTQAPAGAGDRNKKPGGGKGGWQDDAAKRRGIKTRGDSSGGVDRGWRGGPKGRGRHQDSASTFQAPTEPIVREVHVPETVSVADLAHKMSIKASEVIKVMMKMGQMVTINQVLDQETAMIVVEELGHRAVAAKLDDPEALLVEGEATTDAEQLPRPPVVTVMGHVDHGKTSLLDHIRRAKVAAGEAGGITQHIGAYHVETPRGVITFLDTPGHEAFTAMRARGAKATDIVVLVVAADDGVMPQTKEAIAHAKAGGVPIVVAINKIDKPEANPDRVKQELVAEGVVPEEYGGDSPFVPVSAKTGVGIDDLLENVLLQAEVLELKAPIEAPAKGIVIEAKLDKGKGPVATILVQSGTLNRGDVVLAGSAYGRVRAMLDENGKPTKEAGPSIPVEIQGLSEVPGAGEEVIVLPDERKAREIALFRQGKFRDVKLAKQQAAKLESMLEQMGEGEVQNLPLIIKADVQGSQEALVQSLLKLSTDEVRVQIVHSAVGGISENDVNLATASKAVIIGFNTRADAQARKLAESNGIDIRYYNIIYDAVDEVKAAMSGMLAPEKREVITGMVEVRQVFKVPKIGTVAGCMVTDGIVKRSSSVRVLRNNVVIFTGELESLKRFKDDVKEVKQGFECGMSVKNFNDVIEGDQFEVFEVTEVARTL.

The span at 49 to 63 (HLRKSHGATDGDKRK) shows a compositional bias: basic and acidic residues. Disordered regions lie at residues 49–86 (HLRK…ARTI) and 100–383 (DDVA…TFQA). The span at 105–114 (GAEQGQAQVA) shows a compositional bias: low complexity. Over residues 121-177 (ELKRREEEARREAELLEKQAQELRERQERLEREEAERRAREEAAEAERRRAEEEAAA) the composition is skewed to basic and acidic residues. Residues 178–209 (KRAAAAAVEAQQAAAQQAAEAQQETAGAQSAQ) show a composition bias toward low complexity. The segment covering 210–261 (DEARAAAERAAQREAAKKAEDAAREAADKTRAEQEEIRKRREAAEAEARAIR) has biased composition (basic and acidic residues). Positions 277–286 (PPKPVEPPKP) are enriched in pro residues. The span at 298-327 (KPAGAGAARPAVKKPAGAAPATTQAPAGAG) shows a compositional bias: low complexity. Residues 356–369 (SSGGVDRGWRGGPK) are compositionally biased toward gly residues. A tr-type G domain is found at 472 to 641 (PRPPVVTVMG…LLQAEVLELK (170 aa)). Residues 481–488 (GHVDHGKT) form a G1 region. 481–488 (GHVDHGKT) serves as a coordination point for GTP. The segment at 506–510 (GITQH) is G2. The G3 stretch occupies residues 527 to 530 (DTPG). GTP contacts are provided by residues 527–531 (DTPGH) and 581–584 (NKID). Positions 581–584 (NKID) are G4. Positions 617 to 619 (SAK) are G5.

Belongs to the TRAFAC class translation factor GTPase superfamily. Classic translation factor GTPase family. IF-2 subfamily.

The protein resides in the cytoplasm. Functionally, one of the essential components for the initiation of protein synthesis. Protects formylmethionyl-tRNA from spontaneous hydrolysis and promotes its binding to the 30S ribosomal subunits. Also involved in the hydrolysis of GTP during the formation of the 70S ribosomal complex. The protein is Translation initiation factor IF-2 of Burkholderia ambifaria (strain MC40-6).